We begin with the raw amino-acid sequence, 224 residues long: 4-aminobenzoate synthase (224 aa).

Positions 77, 84, 138, 169, 173, and 176 each coordinate Fe(2+).

This sequence belongs to the CADD family. Homodimer. Fe(2+) serves as cofactor. Mn(2+) is required as a cofactor.

Involved in de novo para-aminobenzoate (PABA) biosynthesis. Acts as a self-sacrificing or 'suicide' enzyme that utilizes its own active site tyrosine residue(s) as the substrate for PABA synthesis. The side chain of the tyrosine residue is released from the protein backbone via cleavage of the C(alpha)-C(beta) bond, leaving a glycine in place of the original tyrosine residue. Reaction requires O(2) and a reduced dimetal cofactor. The sequence is that of 4-aminobenzoate synthase from Chlamydia pneumoniae (Chlamydophila pneumoniae).